Here is a 156-residue protein sequence, read N- to C-terminus: S-ribosylhomocysteine lyase (156 aa).

H54, H58, and C126 together coordinate Fe cation.

This sequence belongs to the LuxS family. Homodimer. It depends on Fe cation as a cofactor.

The enzyme catalyses S-(5-deoxy-D-ribos-5-yl)-L-homocysteine = (S)-4,5-dihydroxypentane-2,3-dione + L-homocysteine. Functionally, involved in the synthesis of autoinducer 2 (AI-2) which is secreted by bacteria and is used to communicate both the cell density and the metabolic potential of the environment. The regulation of gene expression in response to changes in cell density is called quorum sensing. Catalyzes the transformation of S-ribosylhomocysteine (RHC) to homocysteine (HC) and 4,5-dihydroxy-2,3-pentadione (DPD). This chain is S-ribosylhomocysteine lyase, found in Shouchella clausii (strain KSM-K16) (Alkalihalobacillus clausii).